A 253-amino-acid polypeptide reads, in one-letter code: Claudin domain-containing protein 1 (253 aa).

The chain crosses the membrane as a helical span at residues 5–25; sequence FATAFVIACVLSLISTIYMAA. 2 N-linked (GlcNAc...) asparagine glycosylation sites follow: Asn42 and Asn72. 3 helical membrane-spanning segments follow: residues 141 to 161, 175 to 195, and 216 to 236; these read FLLP…GLCA, ILHL…VAGI, and FCLA…FIWA.

This sequence belongs to the PMP-22/EMP/MP20 family.

The protein resides in the cell junction. It localises to the tight junction. Its subcellular location is the cell membrane. Functionally, plays a role in negatively regulating the permeability of cells to small molecules. This is Claudin domain-containing protein 1 (CLDND1) from Macaca fascicularis (Crab-eating macaque).